Reading from the N-terminus, the 114-residue chain is Reprimo-like protein (114 aa).

Residues valine 61 to leucine 81 form a helical membrane-spanning segment.

Belongs to the reprimo family.

The protein resides in the membrane. This is Reprimo-like protein (rprml) from Danio rerio (Zebrafish).